The primary structure comprises 455 residues: Phosphoglucosamine mutase (455 aa).

Ser102 (phosphoserine intermediate) is an active-site residue. Ser102, Asp241, Asp243, and Asp245 together coordinate Mg(2+). The residue at position 102 (Ser102) is a Phosphoserine.

Belongs to the phosphohexose mutase family. The cofactor is Mg(2+). Post-translationally, activated by phosphorylation.

The catalysed reaction is alpha-D-glucosamine 1-phosphate = D-glucosamine 6-phosphate. Functionally, catalyzes the conversion of glucosamine-6-phosphate to glucosamine-1-phosphate. The protein is Phosphoglucosamine mutase of Legionella pneumophila (strain Corby).